A 194-amino-acid chain; its full sequence is Probable RNA 2'-phosphotransferase (194 aa).

The protein belongs to the KptA/TPT1 family.

Functionally, removes the 2'-phosphate from RNA via an intermediate in which the phosphate is ADP-ribosylated by NAD followed by a presumed transesterification to release the RNA and generate ADP-ribose 1''-2''-cyclic phosphate (APPR&gt;P). May function as an ADP-ribosylase. This chain is Probable RNA 2'-phosphotransferase, found in Escherichia coli O45:K1 (strain S88 / ExPEC).